The primary structure comprises 230 residues: Probable carboxylesterase Culp2 (230 aa).

The segment at residues 1–32 (MNDLLTRRLLTMGAAAAMLAAVLLLTPITVPA) is a signal peptide (tat-type signal). The cysteines at positions 45 and 112 are disulfide-linked. The active-site Nucleophile is the serine 123. A disulfide bridge links cysteine 185 with cysteine 192. Aspartate 189 is an active-site residue. Histidine 207 serves as the catalytic Proton donor/acceptor.

This sequence belongs to the cutinase family. Predicted to be exported by the Tat system. The position of the signal peptide cleavage has not been experimentally proven.

The protein resides in the secreted. It is found in the cell surface. The polypeptide is Probable carboxylesterase Culp2 (cut2) (Mycobacterium bovis (strain ATCC BAA-935 / AF2122/97)).